The sequence spans 1620 residues: ABC-type organic anion transporter ABCA8A (1620 aa).

7 consecutive transmembrane segments (helical) span residues 30-50, 224-244, 263-283, 294-314, 328-348, 357-377, and 397-417; these read TFLE…FLQL, CFLF…SAGV, SAFW…VTLL, VFLT…LSLI, FLTD…GFTA, LEWL…VQLL, and IGTI…TFYF. N-linked (GlcNAc...) asparagine glycosylation is found at N454 and N482. Residues 478-713 form the ABC transporter 1 domain; sequence IRIRNLTKDY…WGIGYHLSLQ (236 aa). Position 514–521 (514–521) interacts with ATP; it reads GHSGAGKS. Residues 861–881 traverse the membrane as a helical segment; it reads IVILILVLGIGLLHILSANIY. N967 carries an N-linked (GlcNAc...) asparagine glycan. 7 consecutive transmembrane segments (helical) span residues 979–999, 1019–1039, 1068–1088, 1105–1125, 1133–1153, 1159–1179, and 1196–1216; these read CFPV…APSA, YLAY…YISM, ALFE…AFYA, ILYV…ISFI, SGLW…FMLI, ISLF…CTLL, and EYSY…VVIL. Residues 1284 to 1517 form the ABC transporter 2 domain; it reads LRKEYKGKKK…FGKEYLLEMK (234 aa). ATP is bound at residue 1322-1329; it reads GHNGAGKS.

Belongs to the ABC transporter superfamily. ABCA family. Expressed in lung, heart, liver, skeletal muscle and testis. Highly expressed in the liver, and is also abundant in heart and skeletal muscle. Highly expressed in heart.

It localises to the cell membrane. Its subcellular location is the basolateral cell membrane. The catalysed reaction is taurocholate(in) + ATP + H2O = taurocholate(out) + ADP + phosphate + H(+). The enzyme catalyses cholesterol(in) + ATP + H2O = cholesterol(out) + ADP + phosphate + H(+). Cholesterol efflux is increased by extracellularly applied taurocholate. In terms of biological role, mediates cholesterol and taurocholate efflux. Through the interaction with ABCA1 potentiates the cholesterol efflux to lipid-free APOA1, in turn regulates high-density lipoprotein cholesterol levels. The chain is ABC-type organic anion transporter ABCA8A from Mus musculus (Mouse).